The chain runs to 424 residues: Probable aminotransferase TAT4 (424 aa).

It belongs to the class-I pyridoxal-phosphate-dependent aminotransferase family. Pyridoxal 5'-phosphate is required as a cofactor.

The chain is Probable aminotransferase TAT4 from Arabidopsis thaliana (Mouse-ear cress).